The sequence spans 215 residues: MSGTQRRGGGAGGERRGRDNRRGQNDRNRNQNEYLERVVAINRVAKVVQGGRRFSFTALVVVGDGEGSVGVGYGKAKEVPAAIAKAVEEAKKHFFKVPLVGRTITHPVIGEKAAGVVMLRPASPGTGVIAGGSARAVLECAGVHDVLAKSLGSSNAINVVHATVDALQQLEEPEEVARRRGKSVEDIAPAAMLRARKEADEAAAAARMEEKAGVN.

Over residues 1 to 12 the composition is skewed to gly residues; sequence MSGTQRRGGGAG. Residues 1 to 31 are disordered; the sequence is MSGTQRRGGGAGGERRGRDNRRGQNDRNRNQ. The segment covering 13-31 has biased composition (basic and acidic residues); it reads GERRGRDNRRGQNDRNRNQ. In terms of domain architecture, S5 DRBM spans 34-97; the sequence is YLERVVAINR…EEAKKHFFKV (64 aa).

Belongs to the universal ribosomal protein uS5 family. Part of the 30S ribosomal subunit. Contacts proteins S4 and S8.

Its function is as follows. With S4 and S12 plays an important role in translational accuracy. Located at the back of the 30S subunit body where it stabilizes the conformation of the head with respect to the body. The polypeptide is Small ribosomal subunit protein uS5 (Cutibacterium acnes (strain DSM 16379 / KPA171202) (Propionibacterium acnes)).